Consider the following 201-residue polypeptide: Probable GTP-binding protein EngB (201 aa).

The region spanning 22-197 is the EngB-type G domain; sequence TFPEYAFIGR…LNYIESINKE (176 aa). GTP-binding positions include 30–37, 57–61, 75–78, 142–145, and 175–178; these read GRSNVGKS, GKTML, DLPG, TKAD, and ITSS. Residues serine 37 and threonine 59 each contribute to the Mg(2+) site.

Belongs to the TRAFAC class TrmE-Era-EngA-EngB-Septin-like GTPase superfamily. EngB GTPase family. It depends on Mg(2+) as a cofactor.

Functionally, necessary for normal cell division and for the maintenance of normal septation. The sequence is that of Probable GTP-binding protein EngB from Bacteroides fragilis (strain ATCC 25285 / DSM 2151 / CCUG 4856 / JCM 11019 / LMG 10263 / NCTC 9343 / Onslow / VPI 2553 / EN-2).